We begin with the raw amino-acid sequence, 284 residues long: Bifunctional protein FolD (284 aa).

NADP(+)-binding positions include 166–168 (GAS) and isoleucine 232.

It belongs to the tetrahydrofolate dehydrogenase/cyclohydrolase family. As to quaternary structure, homodimer.

It catalyses the reaction (6R)-5,10-methylene-5,6,7,8-tetrahydrofolate + NADP(+) = (6R)-5,10-methenyltetrahydrofolate + NADPH. The catalysed reaction is (6R)-5,10-methenyltetrahydrofolate + H2O = (6R)-10-formyltetrahydrofolate + H(+). It participates in one-carbon metabolism; tetrahydrofolate interconversion. Functionally, catalyzes the oxidation of 5,10-methylenetetrahydrofolate to 5,10-methenyltetrahydrofolate and then the hydrolysis of 5,10-methenyltetrahydrofolate to 10-formyltetrahydrofolate. The sequence is that of Bifunctional protein FolD from Glaesserella parasuis serovar 5 (strain SH0165) (Haemophilus parasuis).